A 167-amino-acid polypeptide reads, in one-letter code: V-type proton ATPase subunit c' (167 aa).

The Lumenal segment spans residues Met-1–Lys-13. A helical transmembrane segment spans residues Phe-14–Ala-34. Residues Ala-35–Cys-59 are Cytoplasmic-facing. Residues Leu-60 to Ile-80 form a helical membrane-spanning segment. At Ala-81 to His-101 the chain is on the lumenal side. A helical transmembrane segment spans residues Leu-102–Val-122. The Cytoplasmic segment spans residues Gly-123–Met-140. A helical transmembrane segment spans residues Val-141–Leu-161. Residues Asn-162–Gly-167 are Lumenal-facing.

This sequence belongs to the V-ATPase proteolipid subunit family. As to quaternary structure, V-ATPase is a heteromultimeric enzyme composed of a peripheral catalytic V1 complex (components A to H) attached to an integral membrane V0 proton pore complex (components: a, c, c', c'', d, e, f and VOA1). The decameric c-ring forms the proton-conducting pore, and is composed of eight proteolipid subunits c, one subunit c' and one subunit c''.

The protein localises to the vacuole membrane. Functionally, proton-conducting pore forming subunit of the V0 complex of vacuolar(H+)-ATPase (V-ATPase), a multisubunit enzyme composed of a peripheral complex (V1) that hydrolyzes ATP and a membrane integral complex (V0) that translocates protons. V-ATPase is responsible for acidifying and maintaining the pH of intracellular compartments. This Neurospora crassa (strain ATCC 24698 / 74-OR23-1A / CBS 708.71 / DSM 1257 / FGSC 987) protein is V-type proton ATPase subunit c' (vma-11).